Reading from the N-terminus, the 460-residue chain is Argininosuccinate lyase (460 aa).

This sequence belongs to the lyase 1 family. Argininosuccinate lyase subfamily.

Its subcellular location is the cytoplasm. It catalyses the reaction 2-(N(omega)-L-arginino)succinate = fumarate + L-arginine. Its pathway is amino-acid biosynthesis; L-arginine biosynthesis; L-arginine from L-ornithine and carbamoyl phosphate: step 3/3. The sequence is that of Argininosuccinate lyase from Nitratidesulfovibrio vulgaris (strain DSM 19637 / Miyazaki F) (Desulfovibrio vulgaris).